Here is a 256-residue protein sequence, read N- to C-terminus: uncharacterized protein (256 aa).

The region spanning 7 to 62 is the HTH deoR-type domain; the sequence is PAERQKTLLNLISKQSVISINNLVNILGVSHMTVRRDIQKLEEDGKVISVSGGVQL. A DNA-binding region (H-T-H motif) is located at residues 24-43; sequence ISINNLVNILGVSHMTVRRD.

This is an uncharacterized protein from Haemophilus influenzae (strain ATCC 51907 / DSM 11121 / KW20 / Rd).